The following is a 230-amino-acid chain: Cutinase 1 (230 aa).

The N-terminal stretch at 1-16 (MKFFALTTLLAATASA) is a signal peptide. A propeptide spanning residues 17-31 (LPTSNPAQELEARQL) is cleaved from the precursor. Gly-32 carries the N-D-glucuronoyl glycine modification. Residues Cys-47 and Cys-125 are joined by a disulfide bond. The active-site Nucleophile is the Ser-136. Cys-187 and Cys-194 are disulfide-bonded. The active site involves Asp-191. The active-site Proton donor/acceptor is the His-204.

The protein belongs to the cutinase family. Post-translationally, the 2 disulfide bonds play a critical role in holding the catalytic residues in juxta-position; reduction of the disulfide bridges results in the complete inactivation of the enzyme. O-glycosylated; contains one mole each of mannose, arabinose, N-acetylglucosamine, and glucuronic acid.

The protein localises to the secreted. The catalysed reaction is cutin + H2O = cutin monomers.. With respect to regulation, inhibited by n-undecyl phosphonate (C11Y4). Inhibited by paraoxon. Functionally, catalyzes the hydrolysis of complex carboxylic polyesters found in the cell wall of plants. Degrades cutin, a macromolecule that forms the structure of the plant cuticle. Allows pathogenic fungi to penetrate through the cuticular barrier into the host plant during the initial stage of fungal infection. This Fusarium vanettenii (Neocosmospora pisi) protein is Cutinase 1 (CUT1).